Here is a 461-residue protein sequence, read N- to C-terminus: MSFRSVLLTALLSLSFTTTMQAAHHHYHRYTDKLHRQNHKKDLISPKPTEQEACNTSSLSKELIPLSEQRGLLSPICDFISERPCLHGVSVRNLKQALKNSAGTQIALDWSILPQWFNPRVSHAPKLSIRDFGYSAHQTVTEATPPCWQNCFNPSAAVTIYDSSYGKGVFQISYTLVRYWRENAATAGDAMMLAGSINDYPSRQNIFSQFTFSQNFPNERVSLTIGQYSLYAIDGTLYNNDQQLGFISYALSQNPTATYSSGSLGAYLQVAPTASTSLQIGFQDAYNISGSSIKWSNLTKNRYNFHGFASWAPRCCLGSGQYSVLLYVTRQVPEQMEQTMGWSVNASQYISSKLYVFGRYSGVTGHVFPINRTYSFGMASANLFNRNPQDLFGIACAFNNVHLSASPNTKRKYETVIEGFAAIGCGPYLSFAPDFQLYLYPALRPNKQSARVYSVRANLAI.

The signal sequence occupies residues 1 to 22 (MSFRSVLLTALLSLSFTTTMQA).

The protein belongs to the OprB family.

It localises to the cell outer membrane. Its function is as follows. Facilitates L-arginine uptake, as part of the AaxABC system. The arginine uptake by the bacterium in the macrophage may be a virulence factor against the host innate immune response. In Chlamydia trachomatis serovar A (strain ATCC VR-571B / DSM 19440 / HAR-13), this protein is Porin AaxA (aaxA).